The following is a 557-amino-acid chain: 6-phosphofructo-2-kinase/fructose-2,6-bisphosphatase 2 (557 aa).

Positions 1-16 are enriched in low complexity; the sequence is MSENSTFSTEDSSSSS. A disordered region spans residues 1-21; the sequence is MSENSTFSTEDSSSSSYKPHA. Ser-2 carries the N-acetylserine modification. Positions 2–251 are 6-phosphofructo-2-kinase; sequence SENSTFSTED…VYYLMNIHVH (250 aa). Ser-32 is subject to Phosphoserine; by PKA. ATP is bound at residue 48-56; sequence GLPARGKTY. 2 residues coordinate beta-D-fructose 6-phosphate: Arg-81 and Arg-105. Asp-131 is a catalytic residue. Beta-D-fructose 6-phosphate is bound by residues Thr-133 and Arg-139. The active site involves Cys-161. 170 to 175 serves as a coordination point for ATP; sequence NILEVK. Positions 175, 196, and 200 each coordinate beta-D-fructose 6-phosphate. Residues 252–557 form a fructose-2,6-bisphosphatase region; it reads PRTIYLCRHG…PSMASLTLLS (306 aa). Arg-259 provides a ligand contact to beta-D-fructose 2,6-bisphosphate. His-260 (tele-phosphohistidine intermediate) is an active-site residue. Residues Asn-266 and Gly-272 each contribute to the beta-D-fructose 2,6-bisphosphate site. The active-site Proton donor/acceptor is Glu-329. Positions 340, 354, 358, 369, 395, and 399 each coordinate beta-D-fructose 2,6-bisphosphate. Residue 351–354 participates in ATP binding; the sequence is FALR. ATP is bound by residues 395-399 and Tyr-431; that span reads QAVMR. Residues 449-495 form a disordered region; the sequence is RDKPTHNFPKSQTPVRMRRNSFTPLSSSNTIRRPRNYSVGSRPLKPL. The span at 456-479 shows a compositional bias: polar residues; it reads FPKSQTPVRMRRNSFTPLSSSNTI. At Ser-469 the chain carries Phosphoserine. Thr-471 carries the post-translational modification Phosphothreonine. Thr-478 bears the Phosphothreonine; by PKC mark. 2 positions are modified to phosphoserine: Ser-486 and Ser-496.

In the C-terminal section; belongs to the phosphoglycerate mutase family. In terms of assembly, homodimer. Forms a heterodimer with PFKFB3. In terms of processing, phosphorylation by AMPK stimulates activity.

The catalysed reaction is beta-D-fructose 2,6-bisphosphate + H2O = beta-D-fructose 6-phosphate + phosphate. It catalyses the reaction beta-D-fructose 6-phosphate + ATP = beta-D-fructose 2,6-bisphosphate + ADP + H(+). Phosphorylation results in the activation of the kinase activity. Synthesis and degradation of fructose 2,6-bisphosphate. This Rattus norvegicus (Rat) protein is 6-phosphofructo-2-kinase/fructose-2,6-bisphosphatase 2 (Pfkfb2).